A 394-amino-acid polypeptide reads, in one-letter code: NAC domain-containing protein 26 (394 aa).

The region spanning 7–156 (VPPGFRFHPT…GWVVCRVFKK (150 aa)) is the NAC domain. A DNA-binding region spans residues 107 to 162 (IGMRKTLVFYKGRAPNGQKSDWIMHEYRLETSENGTPQEEGWVVCRVFKKKLAATV).

The protein belongs to the plant vascular related NAC-domain protein family. Interacts with NAC083/VNI2. As to expression, detected in root vessels of protoxylems, outermost metaxylems, inner metaxylems, shoots and hypocotyls. Expressed in roots, hypocotyls, cotyledons and leaves. Expressed in developing xylems. Specifically expressed in vessels in the secondary xylem of the root-hypocotyl region, and in vessels but not in interfascicular fibers in stems.

The protein localises to the nucleus. In terms of biological role, transcription activator that binds to the secondary wall NAC binding element (SNBE), 5'-(T/A)NN(C/T)(T/C/G)TNNNNNNNA(A/C)GN(A/C/T)(A/T)-3', in the promoter of target genes. Involved in xylem formation by promoting the expression of secondary wall-associated transcription factors and of genes involved in secondary wall biosynthesis and programmed cell death, genes driven by the secondary wall NAC binding element (SNBE). Triggers thickening of secondary walls. This is NAC domain-containing protein 26 from Arabidopsis thaliana (Mouse-ear cress).